A 629-amino-acid polypeptide reads, in one-letter code: tRNA uridine 5-carboxymethylaminomethyl modification enzyme MnmG (629 aa).

13–18 (GGGHAG) contributes to the FAD binding site. 273-287 (GPRYCPSIEDKIMRF) contributes to the NAD(+) binding site.

It belongs to the MnmG family. In terms of assembly, homodimer. Heterotetramer of two MnmE and two MnmG subunits. It depends on FAD as a cofactor.

It localises to the cytoplasm. In terms of biological role, NAD-binding protein involved in the addition of a carboxymethylaminomethyl (cmnm) group at the wobble position (U34) of certain tRNAs, forming tRNA-cmnm(5)s(2)U34. This Tolumonas auensis (strain DSM 9187 / NBRC 110442 / TA 4) protein is tRNA uridine 5-carboxymethylaminomethyl modification enzyme MnmG.